A 1211-amino-acid polypeptide reads, in one-letter code: DNA-directed RNA polymerase subunit beta' (1211 aa).

Zn(2+)-binding residues include Cys-60, Cys-62, Cys-75, and Cys-78. 3 residues coordinate Mg(2+): Asp-449, Asp-451, and Asp-453. Residues Cys-818, Cys-892, Cys-899, and Cys-902 each contribute to the Zn(2+) site.

This sequence belongs to the RNA polymerase beta' chain family. In terms of assembly, the RNAP catalytic core consists of 2 alpha, 1 beta, 1 beta' and 1 omega subunit. When a sigma factor is associated with the core the holoenzyme is formed, which can initiate transcription. It depends on Mg(2+) as a cofactor. Zn(2+) serves as cofactor.

It carries out the reaction RNA(n) + a ribonucleoside 5'-triphosphate = RNA(n+1) + diphosphate. Its function is as follows. DNA-dependent RNA polymerase catalyzes the transcription of DNA into RNA using the four ribonucleoside triphosphates as substrates. The sequence is that of DNA-directed RNA polymerase subunit beta' from Limosilactobacillus reuteri (strain DSM 20016) (Lactobacillus reuteri).